A 160-amino-acid chain; its full sequence is Ribosomal RNA large subunit methyltransferase H (160 aa).

Residues leucine 76, glycine 108, and 127-132 (LGELTW) contribute to the S-adenosyl-L-methionine site.

Belongs to the RNA methyltransferase RlmH family. In terms of assembly, homodimer.

It is found in the cytoplasm. The catalysed reaction is pseudouridine(1915) in 23S rRNA + S-adenosyl-L-methionine = N(3)-methylpseudouridine(1915) in 23S rRNA + S-adenosyl-L-homocysteine + H(+). Functionally, specifically methylates the pseudouridine at position 1915 (m3Psi1915) in 23S rRNA. The sequence is that of Ribosomal RNA large subunit methyltransferase H from Brucella anthropi (strain ATCC 49188 / DSM 6882 / CCUG 24695 / JCM 21032 / LMG 3331 / NBRC 15819 / NCTC 12168 / Alc 37) (Ochrobactrum anthropi).